The following is a 281-amino-acid chain: Large ribosomal subunit protein uL2 (281 aa).

The segment at 215 to 281 (LGRRPHTRGV…RRNNRKDSKK (67 aa)) is disordered. A compositionally biased stretch (basic and acidic residues) spans 258-269 (KTRDNKSTDKFI). A compositionally biased stretch (basic residues) spans 270–281 (VRRRNNRKDSKK).

It belongs to the universal ribosomal protein uL2 family. In terms of assembly, part of the 50S ribosomal subunit. Forms a bridge to the 30S subunit in the 70S ribosome.

Its function is as follows. One of the primary rRNA binding proteins. Required for association of the 30S and 50S subunits to form the 70S ribosome, for tRNA binding and peptide bond formation. It has been suggested to have peptidyltransferase activity; this is somewhat controversial. Makes several contacts with the 16S rRNA in the 70S ribosome. The protein is Large ribosomal subunit protein uL2 of Pelagibacter ubique (strain HTCC1062).